Here is a 420-residue protein sequence, read N- to C-terminus: MAASVQPACLDLHFSGKHPPLLKHNAIIVRCVSSPNVIPEADSISGPPDIINTNRDQRKVVRIAWEKLVRWSRSLRAKAKTDVLERTRKVVVLGGGSFGTAMAAHVARRKEGLEVNMLVRDSFVCQSINENHHNCKYFPEHKLPENVIATTDAKAALLDADYCLHAVPVQFSSSFLEGIADYVDPGLPFISLSKGLELNTLRMMSQIIPIALKNPRQPFVALSGPSFALELMNNLPTAMVVASKDKKLANAVQQLLASSYLRINTSSDVTGVEIAGALKNVLAIAAGIVDGMNLGNNSMAALVSQGCSEIRWLATKMGAKPTTITGLSGTGDIMLTCFVNLSRNRTVGVRLGSGETLDDILTSMNQVAEGVATAGAVIALAQKYNVKLPVLTAVAKIIDNELTPTKAVLELMNLPQIEEV.

The transit peptide at 1–45 (MAASVQPACLDLHFSGKHPPLLKHNAIIVRCVSSPNVIPEADSIS) directs the protein to the chloroplast. Residues 94 to 99 (GGGSFG), Phe-171, Lys-194, and Ala-228 contribute to the NAD(+) site. Residue Lys-194 coordinates substrate. The Proton acceptor role is filled by Lys-279. The NAD(+) site is built by Arg-343 and Glu-369. 343–344 (RN) contributes to the substrate binding site.

It belongs to the NAD-dependent glycerol-3-phosphate dehydrogenase family.

It is found in the plastid. It localises to the chloroplast. It catalyses the reaction sn-glycerol 3-phosphate + NAD(+) = dihydroxyacetone phosphate + NADH + H(+). It functions in the pathway membrane lipid metabolism; glycerophospholipid metabolism. Functionally, required to supply glycerol-3-phosphate in the chloroplast for the synthesis of glycerolipids. Required for activation of systemic acquired resistance (SAR). Provision of glycerol-3-phosphate may be involved in generating lipid signals necessary for mediating defense responses and SAR. The chain is Glycerol-3-phosphate dehydrogenase [NAD(+)] 2, chloroplastic (GLY1) from Arabidopsis thaliana (Mouse-ear cress).